Here is a 618-residue protein sequence, read N- to C-terminus: D-glucuronyl C5-epimerase (618 aa).

Residues 1–11 lie on the Cytoplasmic side of the membrane; sequence MRCLAARVNYK. The helical; Signal-anchor for type II membrane protein transmembrane segment at 12 to 29 threads the bilayer; it reads TLIIICALFTLVTVLLWN. Residues 30-618 lie on the Lumenal side of the membrane; it reads KCSSDKAIQF…YLKGSRAKHN (589 aa). Substrate contacts are provided by residues Y180, 185–187, Q202, Y210, Q213, and Q216; that span reads RDR. Ca(2+) contacts are provided by T238, E240, T269, N270, and D393. Substrate-binding positions include 430–433, 500–501, N511, Y515, Y561, R564, and 573–582; these read KLGE, EY, and NLARWDYHTT.

This sequence belongs to the D-glucuronyl C5-epimerase family. In terms of assembly, homodimer. Interacts with HS2ST1. As to expression, widely expressed with highest levels in lung and lowest levels in spleen.

The protein resides in the golgi apparatus membrane. It carries out the reaction [heparosan-N-sulfate](n) = [heparan-N-sulfate](n). It functions in the pathway glycan metabolism; heparan sulfate biosynthesis. The protein operates within glycan metabolism; heparin biosynthesis. In terms of biological role, converts D-glucuronic acid residues adjacent to N-sulfate sugar residues to L-iduronic acid residues, both in maturing heparan sulfate (HS) and heparin chains. This is important for further modifications that determine the specificity of interactions between these glycosaminoglycans and proteins. This chain is D-glucuronyl C5-epimerase (Glce), found in Mus musculus (Mouse).